We begin with the raw amino-acid sequence, 389 residues long: LL-diaminopimelate aminotransferase (389 aa).

Residues tyrosine 13 and glycine 38 each contribute to the substrate site. Pyridoxal 5'-phosphate is bound by residues tyrosine 67, 101-102 (SK), tyrosine 126, asparagine 176, tyrosine 207, and 235-237 (SLS). Positions 102, 126, and 176 each coordinate substrate. At lysine 238 the chain carries N6-(pyridoxal phosphate)lysine. Arginine 246 lines the pyridoxal 5'-phosphate pocket. Position 364 (arginine 364) interacts with substrate.

The protein belongs to the class-I pyridoxal-phosphate-dependent aminotransferase family. LL-diaminopimelate aminotransferase subfamily. As to quaternary structure, homodimer. Pyridoxal 5'-phosphate is required as a cofactor.

It catalyses the reaction (2S,6S)-2,6-diaminopimelate + 2-oxoglutarate = (S)-2,3,4,5-tetrahydrodipicolinate + L-glutamate + H2O + H(+). Its pathway is amino-acid biosynthesis; L-lysine biosynthesis via DAP pathway; LL-2,6-diaminopimelate from (S)-tetrahydrodipicolinate (aminotransferase route): step 1/1. Functionally, involved in the synthesis of meso-diaminopimelate (m-DAP or DL-DAP), required for both lysine and peptidoglycan biosynthesis. Catalyzes the direct conversion of tetrahydrodipicolinate to LL-diaminopimelate. The polypeptide is LL-diaminopimelate aminotransferase (Halothermothrix orenii (strain H 168 / OCM 544 / DSM 9562)).